Reading from the N-terminus, the 285-residue chain is Homeobox protein vex1 (285 aa).

2 disordered regions span residues 30 to 54 (KSGN…LPSV) and 69 to 88 (NEER…APQE). Positions 69–80 (NEERSPPVKDQL) are enriched in basic and acidic residues. A DNA-binding region (homeobox) is located at residues 131 to 190 (AARARTKFSPEQLEELERSFKENRYIGSSEKRRLSKVLKLSETQIKTWFQNRRMKFKRQT).

Widely expressed in the embryo prior to gastrulation. Becomes restricted to the ventral marginal zone by mid/late gastrulation. Ventral localization persists during gastrulation and neurulation in the ventral region of the closed blastopore and in the proctodeum during tail bud stages.

The protein resides in the nucleus. Transcriptional repressor. Acts in a ventral signaling pathway downstream of bmp4 to antagonize the Spemann organizer and ventrally pattern the embryonic mesoderm. Represses transcription of the dorsal genes gsc and otx2. The protein is Homeobox protein vex1 of Xenopus laevis (African clawed frog).